The chain runs to 218 residues: Adenylate kinase (218 aa).

10–15 serves as a coordination point for ATP; the sequence is GAGKGT. Positions 30-59 are NMP; it reads STGDMLRAAVKAGTPLGIEAKKVMDSGGLV. AMP-binding positions include T31, R36, 57–59, 85–88, and Q92; these read GLV and GFPR. The LID stretch occupies residues 122-159; sequence GRRSHSASGRTYHVKYNPPKVEGLDDVTGEPLIQREDD. Residues R123 and 132-133 contribute to the ATP site; that span reads TY. AMP contacts are provided by R156 and R167. Residue G203 participates in ATP binding.

Belongs to the adenylate kinase family. Monomer.

It is found in the cytoplasm. It carries out the reaction AMP + ATP = 2 ADP. The protein operates within purine metabolism; AMP biosynthesis via salvage pathway; AMP from ADP: step 1/1. In terms of biological role, catalyzes the reversible transfer of the terminal phosphate group between ATP and AMP. Plays an important role in cellular energy homeostasis and in adenine nucleotide metabolism. The chain is Adenylate kinase from Polaromonas naphthalenivorans (strain CJ2).